The primary structure comprises 412 residues: MKVYLVGGAVRDSLLNLPIKDRDWVIVGGTKEILLKKNFQQVGKDFPVFLHPETHEEYSLARKERKSGRGYTGFHTEFSSDVTLEEDLIRRDLTINAIAQDENGNYIDPFQGRKDLNLRLLRHVSESFTEDPLRILRTARFAANLMHLGFHIDKDTMILMCKMVKKNELLYLTKNRIWNETEKAFKTLNPHVYFQILHACKALNFIFPEIFFLYERRTFFSILFTNFYSISFLSIGLSKISTLTKDVSIRFSYLCQFLSEKIDFSSTKENYDDDSAKLVKKLCKRCNIPSHIEELAVLNTGFCVFLSSIHYQSSSNIIKMFSKIDAWRKPDRIYKLSFLCDFNLFYHQNKIDNSKLKTGFLKKCFFIIKDISVKKILNQGFKGYQIKNELNKLRVNKLKFWRMKKKCFFFKE.

Glycine 8 and arginine 11 together coordinate ATP. Positions 8 and 11 each coordinate CTP. 2 residues coordinate Mg(2+): aspartate 21 and aspartate 23. ATP-binding residues include arginine 91, arginine 137, and arginine 140. CTP is bound by residues arginine 91, arginine 137, and arginine 140.

The protein belongs to the tRNA nucleotidyltransferase/poly(A) polymerase family. Bacterial CCA-adding enzyme type 2 subfamily. It depends on Mg(2+) as a cofactor.

The enzyme catalyses a tRNA precursor + 2 CTP + ATP = a tRNA with a 3' CCA end + 3 diphosphate. The catalysed reaction is a tRNA with a 3' CCA end + 2 CTP + ATP = a tRNA with a 3' CCACCA end + 3 diphosphate. Catalyzes the addition and repair of the essential 3'-terminal CCA sequence in tRNAs without using a nucleic acid template. Adds these three nucleotides in the order of C, C, and A to the tRNA nucleotide-73, using CTP and ATP as substrates and producing inorganic pyrophosphate. tRNA 3'-terminal CCA addition is required both for tRNA processing and repair. Also involved in tRNA surveillance by mediating tandem CCA addition to generate a CCACCA at the 3' terminus of unstable tRNAs. While stable tRNAs receive only 3'-terminal CCA, unstable tRNAs are marked with CCACCA and rapidly degraded. This chain is CCA-adding enzyme, found in Buchnera aphidicola subsp. Schizaphis graminum (strain Sg).